The sequence spans 207 residues: HTH-type transcriptional regulator BetI 2 (207 aa).

The region spanning 8 to 68 (PIRRQQLIKA…ATMRQILTDL (61 aa)) is the HTH tetR-type domain. Residues 31-50 (TVMRIARHAGVSAGIISHYF) constitute a DNA-binding region (H-T-H motif).

Its pathway is amine and polyamine biosynthesis; betaine biosynthesis via choline pathway [regulation]. In terms of biological role, repressor involved in the biosynthesis of the osmoprotectant glycine betaine. It represses transcription of the choline transporter BetT and the genes of BetAB involved in the synthesis of glycine betaine. This Chromohalobacter salexigens (strain ATCC BAA-138 / DSM 3043 / CIP 106854 / NCIMB 13768 / 1H11) protein is HTH-type transcriptional regulator BetI 2.